We begin with the raw amino-acid sequence, 183 residues long: Probable actin-related protein 2/3 complex subunit 3 (183 aa).

This sequence belongs to the ARPC3 family. As to quaternary structure, component of the Arp2/3 complex.

The protein localises to the cytoplasm. It is found in the cytoskeleton. In terms of biological role, functions as a component of the Arp2/3 complex which is involved in regulation of actin polymerization and together with an activating nucleation-promoting factor (NPF) mediates the formation of branched actin networks. The chain is Probable actin-related protein 2/3 complex subunit 3 (arx-5) from Caenorhabditis elegans.